Reading from the N-terminus, the 173-residue chain is Mediator of RNA polymerase II transcription subunit 10 (173 aa).

A compositionally biased stretch (low complexity) spans 1–10 (MVQQQQQSQQ). The interval 1 to 42 (MVQQQQQSQQRMMELHERNDREKLARKTEKEREEERRKQEDD) is disordered. Residues 13 to 42 (MELHERNDREKLARKTEKEREEERRKQEDD) are compositionally biased toward basic and acidic residues.

It belongs to the Mediator complex subunit 10 family. As to quaternary structure, component of the Mediator complex.

The protein localises to the nucleus. In terms of biological role, component of the Mediator complex, a coactivator involved in the regulated transcription of nearly all RNA polymerase II-dependent genes. Mediator functions as a bridge to convey information from gene-specific regulatory proteins to the basal RNA polymerase II transcription machinery. Mediator is recruited to promoters by direct interactions with regulatory proteins and serves as a scaffold for the assembly of a functional preinitiation complex with RNA polymerase II and the general transcription factors. Required for germ cell development and for transcriptional activation of certain stage-specific inducible promoters. This is Mediator of RNA polymerase II transcription subunit 10 (mdt-10) from Caenorhabditis elegans.